The following is a 161-amino-acid chain: Ragulator complex protein LAMTOR1 (161 aa).

Residues 1-43 (MGCCYSSENEDSDQDREERKLLLDPSSTPTKALNGAEPNYHSL) form a disordered region. Glycine 2 carries the N-myristoyl glycine lipid modification. Residues cysteine 3 and cysteine 4 are each lipidated (S-palmitoyl cysteine). Lysine 20 is covalently cross-linked (Glycyl lysine isopeptide (Lys-Gly) (interchain with G-Cter in ubiquitin)). Serine 27 is subject to Phosphoserine. Position 28 is a phosphothreonine (threonine 28). Residue lysine 31 forms a Glycyl lysine isopeptide (Lys-Gly) (interchain with G-Cter in ubiquitin) linkage. A phosphoserine mark is found at serine 42 and serine 56. Lysine 60 is covalently cross-linked (Glycyl lysine isopeptide (Lys-Gly) (interchain with G-Cter in ubiquitin)). Residue serine 98 is modified to Phosphoserine. Glycyl lysine isopeptide (Lys-Gly) (interchain with G-Cter in ubiquitin) cross-links involve residues lysine 103 and lysine 104. Positions 121-161 (SEPIPFSDLQQVSRIAAYAYSALSQIRVDAKEELVVQFGIP) are interaction with LAMTOR2 and LAMTOR3. Phosphoserine is present on serine 141.

It belongs to the LAMTOR1 family. In terms of assembly, part of the Ragulator complex composed of LAMTOR1, LAMTOR2, LAMTOR3, LAMTOR4 and LAMTOR5. LAMTOR4 and LAMTOR5 form a heterodimer that interacts, through LAMTOR1, with a LAMTOR2, LAMTOR3 heterodimer. Interacts with LAMTOR2 and LAMTOR3; the interaction is direct. The Ragulator complex interacts with both the mTORC1 complex and heterodimers constituted of the Rag GTPases RagA/RRAGA, RagB/RRAGB, RagC/RRAGC and RagD/RRAGD; regulated by amino acid availability. The Ragulator complex interacts with SLC38A9; the probable amino acid sensor. Component of the lysosomal folliculin complex (LFC), composed of FLCN, FNIP1 (or FNIP2), RagA/RRAGA or RagB/RRAGB GDP-bound, RagC/RRAGC or RagD/RRAGD GTP-bound, and Ragulator. Associates with the lysosomal V-ATPase complex; interaction promotes the guanine nucleotide exchange factor (GEF) of the Ragulator complex. Interacts with MMP14. Interacts with CDKN1B; prevents the interaction of CDKN1B with RHOA leaving RHOA in a form accessible to activation by ARHGEF2. Interacts with PIP4P1. In terms of processing, N-terminal myristoylation and palmitoylation mediates its recruitment to lysosome membranes, thereby promoting localization of the Ragulator complex to lysosomes. N-myristoylation by NMT1 is required for palmitoylation at Cys-3 and Cys-4. Post-translationally, ubiquitinated at Lys-60, Lys-103 and Lys-104 by UBE3A in neurons, promoting its degradation by the proteasome, thereby limiting mTORC1 signaling and activity-dependent synaptic remodeling. Ubiquitination at Lys-20 impairs the association with the lysosomal V-ATPase complex. Deubiquitination at Lys-20 by USP32 promotes the association with the lysosomal V-ATPase complex and subsequent activation of the mTORC1 complex.

The protein resides in the lysosome membrane. It is found in the late endosome membrane. Its function is as follows. Key component of the Ragulator complex, a multiprotein complex involved in amino acid sensing and activation of mTORC1, a signaling complex promoting cell growth in response to growth factors, energy levels, and amino acids. Activated by amino acids through a mechanism involving the lysosomal V-ATPase, the Ragulator plays a dual role for the small GTPases Rag (RagA/RRAGA, RagB/RRAGB, RagC/RRAGC and/or RagD/RRAGD): it (1) acts as a guanine nucleotide exchange factor (GEF), activating the small GTPases Rag and (2) mediates recruitment of Rag GTPases to the lysosome membrane. Activated Ragulator and Rag GTPases function as a scaffold recruiting mTORC1 to lysosomes where it is in turn activated. LAMTOR1 is directly responsible for anchoring the Ragulator complex to the lysosomal membrane. LAMTOR1 wraps around the other subunits of the Ragulator complex to hold them in place and interacts with the Rag GTPases, thereby playing a key role in the recruitment of the mTORC1 complex to lysosomes. Also involved in the control of embryonic stem cells differentiation via non-canonical RagC/RRAGC and RagD/RRAGD activation: together with FLCN, it is necessary to recruit and activate RagC/RRAGC and RagD/RRAGD at the lysosomes, and to induce exit of embryonic stem cells from pluripotency via non-canonical, mTOR-independent TFE3 inactivation. Also required for late endosomes/lysosomes biogenesis it may regulate both the recycling of receptors through endosomes and the MAPK signaling pathway through recruitment of some of its components to late endosomes. May be involved in cholesterol homeostasis regulating LDL uptake and cholesterol release from late endosomes/lysosomes. May also play a role in RHOA activation. The sequence is that of Ragulator complex protein LAMTOR1 from Mus musculus (Mouse).